The sequence spans 922 residues: Translation initiation factor IF-2 (922 aa).

The tract at residues 243 to 329 (AAREAAKLAE…GKSKSGQEET (87 aa)) is disordered. A compositionally biased stretch (low complexity) spans 250–264 (LAEAQKAAAPAPAAP). Residues 267 to 298 (KTLHKPDKPAAAKGAKGPDKKPAGAWKDDAAR) are compositionally biased toward basic and acidic residues. Residues 422 to 589 (ARPPVVTVMG…AILLQAEVLE (168 aa)) enclose the tr-type G domain. A G1 region spans residues 431–438 (GHVDHGKT). 431 to 438 (GHVDHGKT) serves as a coordination point for GTP. Positions 456 to 460 (GITQH) are G2. Residues 477 to 480 (DTPG) form a G3 region. Residues 477–481 (DTPGH) and 531–534 (NKID) each bind GTP. Residues 531-534 (NKID) are G4. Residues 567-569 (SAK) form a G5 region.

This sequence belongs to the TRAFAC class translation factor GTPase superfamily. Classic translation factor GTPase family. IF-2 subfamily.

The protein resides in the cytoplasm. In terms of biological role, one of the essential components for the initiation of protein synthesis. Protects formylmethionyl-tRNA from spontaneous hydrolysis and promotes its binding to the 30S ribosomal subunits. Also involved in the hydrolysis of GTP during the formation of the 70S ribosomal complex. In Thiobacillus denitrificans (strain ATCC 25259 / T1), this protein is Translation initiation factor IF-2.